We begin with the raw amino-acid sequence, 20 residues long: T cell receptor alpha joining 42 (20 aa).

The disordered stretch occupies residues Tyr1–Pro20.

Alpha-beta TR is a heterodimer composed of an alpha and beta chain; disulfide-linked. The alpha-beta TR is associated with the transmembrane signaling CD3 coreceptor proteins to form the TR-CD3 (TcR or TCR). The assembly of alpha-beta TR heterodimers with CD3 occurs in the endoplasmic reticulum where a single alpha-beta TR heterodimer associates with one CD3D-CD3E heterodimer, one CD3G-CD3E heterodimer and one CD247 homodimer forming a stable octameric structure. CD3D-CD3E and CD3G-CD3E heterodimers preferentially associate with TR alpha and TR beta chains, respectively. The association of the CD247 homodimer is the last step of TcR assembly in the endoplasmic reticulum and is required for transport to the cell surface.

It is found in the cell membrane. Functionally, j region of the variable domain of T cell receptor (TR) alpha chain that participates in the antigen recognition. Alpha-beta T cell receptors are antigen specific receptors which are essential to the immune response and are present on the cell surface of T lymphocytes. Recognize peptide-major histocompatibility (MH) (pMH) complexes that are displayed by antigen presenting cells (APC), a prerequisite for efficient T cell adaptive immunity against pathogens. Binding of alpha-beta TR to pMH complex initiates TR-CD3 clustering on the cell surface and intracellular activation of LCK that phosphorylates the ITAM motifs of CD3G, CD3D, CD3E and CD247 enabling the recruitment of ZAP70. In turn, ZAP70 phosphorylates LAT, which recruits numerous signaling molecules to form the LAT signalosome. The LAT signalosome propagates signal branching to three major signaling pathways, the calcium, the mitogen-activated protein kinase (MAPK) kinase and the nuclear factor NF-kappa-B (NF-kB) pathways, leading to the mobilization of transcription factors that are critical for gene expression and essential for T cell growth and differentiation. The T cell repertoire is generated in the thymus, by V-(D)-J rearrangement. This repertoire is then shaped by intrathymic selection events to generate a peripheral T cell pool of self-MH restricted, non-autoaggressive T cells. Post-thymic interaction of alpha-beta TR with the pMH complexes shapes TR structural and functional avidity. The chain is T cell receptor alpha joining 42 from Homo sapiens (Human).